Consider the following 122-residue polypeptide: Large ribosomal subunit protein bL12 (122 aa).

This sequence belongs to the bacterial ribosomal protein bL12 family. As to quaternary structure, homodimer. Part of the ribosomal stalk of the 50S ribosomal subunit. Forms a multimeric L10(L12)X complex, where L10 forms an elongated spine to which 2 to 4 L12 dimers bind in a sequential fashion. Binds GTP-bound translation factors.

Its function is as follows. Forms part of the ribosomal stalk which helps the ribosome interact with GTP-bound translation factors. Is thus essential for accurate translation. This is Large ribosomal subunit protein bL12 from Sulfurimonas denitrificans (strain ATCC 33889 / DSM 1251) (Thiomicrospira denitrificans (strain ATCC 33889 / DSM 1251)).